A 724-amino-acid polypeptide reads, in one-letter code: Long-chain-fatty-acid--CoA ligase ACSBG1 (724 aa).

Positions 1–51 (MPRNSGAGYGCPHGDPSMLDSRETPQESRQDMTVGTTQEKLKTSSLTDRQP) are disordered. Positions 20–30 (DSRETPQESRQ) are enriched in basic and acidic residues. Over residues 31-51 (DMTVGTTQEKLKTSSLTDRQP) the composition is skewed to polar residues. 2 positions are modified to phosphoserine: Ser53 and Ser56. ATP contacts are provided by residues 282-290 (TSGTTGNPK), 472-477 (AGYGLS), Asp550, and Arg565. The residue at position 658 (Tyr658) is a Phosphotyrosine. Residue Lys701 coordinates ATP.

Belongs to the ATP-dependent AMP-binding enzyme family. Bubblegum subfamily.

The protein resides in the cytoplasm. It is found in the cytoplasmic vesicle. It localises to the microsome. Its subcellular location is the endoplasmic reticulum. The protein localises to the cell membrane. It carries out the reaction a long-chain fatty acid + ATP + CoA = a long-chain fatty acyl-CoA + AMP + diphosphate. The enzyme catalyses (E)-hexadec-2-enoate + ATP + CoA = (2E)-hexadecenoyl-CoA + AMP + diphosphate. The catalysed reaction is hexadecanoate + ATP + CoA = hexadecanoyl-CoA + AMP + diphosphate. In terms of biological role, catalyzes the conversion of fatty acids such as long-chain and very long-chain fatty acids to their active form acyl-CoAs for both synthesis of cellular lipids, and degradation via beta-oxidation. Can activate diverse saturated, monosaturated and polyunsaturated fatty acids. The polypeptide is Long-chain-fatty-acid--CoA ligase ACSBG1 (Macaca fascicularis (Crab-eating macaque)).